The chain runs to 677 residues: Methionine--tRNA ligase (677 aa).

A 'HIGH' region motif is present at residues 15 to 25; sequence PYANGSIHLGH. Residues Cys-146, Cys-149, Cys-159, and Cys-162 each contribute to the Zn(2+) site. The 'KMSKS' region motif lies at 333–337; it reads KMSKS. Lys-336 is an ATP binding site. The tRNA-binding domain occupies 575 to 677; it reads DFAKVDLRVA…AGAKPGHQVK (103 aa).

The protein belongs to the class-I aminoacyl-tRNA synthetase family. MetG type 1 subfamily. As to quaternary structure, homodimer. It depends on Zn(2+) as a cofactor.

The protein resides in the cytoplasm. The enzyme catalyses tRNA(Met) + L-methionine + ATP = L-methionyl-tRNA(Met) + AMP + diphosphate. Functionally, is required not only for elongation of protein synthesis but also for the initiation of all mRNA translation through initiator tRNA(fMet) aminoacylation. The chain is Methionine--tRNA ligase (metG) from Escherichia coli (strain K12).